Reading from the N-terminus, the 214-residue chain is Cytochrome b (214 aa).

4 consecutive transmembrane segments (helical) span residues 31-51 (FGSM…FLAI), 75-96 (WIMQ…YIHI), 111-131 (WLSG…GYVL), and 176-196 (FFAL…IHIL). Heme b-binding residues include His-81 and His-95. Residues His-180 and His-194 each contribute to the heme b site. His-199 lines the a ubiquinone pocket.

Belongs to the cytochrome b family. In terms of assembly, the cytochrome bc1 complex contains 3 respiratory subunits (MT-CYB, CYC1 and UQCRFS1), 2 core proteins (UQCRC1 and UQCRC2) and probably 6 low-molecular weight proteins. Requires heme b as cofactor.

It localises to the mitochondrion inner membrane. Functionally, component of the ubiquinol-cytochrome c reductase complex (complex III or cytochrome b-c1 complex) that is part of the mitochondrial respiratory chain. The b-c1 complex mediates electron transfer from ubiquinol to cytochrome c. Contributes to the generation of a proton gradient across the mitochondrial membrane that is then used for ATP synthesis. In Agkistrodon contortrix contortrix (Southern copperhead), this protein is Cytochrome b (MT-CYB).